Consider the following 389-residue polypeptide: Oxytocin receptor (389 aa).

Positions 1–27 are disordered; it reads MEGELAANWSTEAVNSSAAPPGAEGNC. Residues 1–38 are Extracellular-facing; it reads MEGELAANWSTEAVNSSAAPPGAEGNCTAGPPRRNEAL. N-linked (GlcNAc...) asparagine glycosylation is found at Asn-8, Asn-15, and Asn-26. Over residues 8 to 18 the composition is skewed to polar residues; it reads NWSTEAVNSSA. A helical membrane pass occupies residues 39-63; that stretch reads ARVEVAVLCLILFLALSGNACVLLA. Topologically, residues 64–74 are cytoplasmic; that stretch reads LRTTRHKHSRL. The chain crosses the membrane as a helical span at residues 75 to 97; sequence FFFMKHLSIADLVVAVFQVLPQL. The Extracellular portion of the chain corresponds to 98-113; sequence LWDITFRFYGPDLLCR. A disulfide bridge connects residues Cys-112 and Cys-187. The helical transmembrane segment at 114–135 threads the bilayer; that stretch reads LVKYLQVVGMFASTYLLLLMSL. The Cytoplasmic segment spans residues 136-154; sequence DRCLAICQPLRSLRRRTDR. A helical transmembrane segment spans residues 155–175; that stretch reads LAVLATWLGCLVASAPQVHIF. The Extracellular segment spans residues 176–202; sequence SLREVADGVFDCWAVFIQPWGPKAYIT. A helical transmembrane segment spans residues 203–225; it reads WITLAVYIVPVIVLAACYGLISF. The Cytoplasmic portion of the chain corresponds to 226 to 275; that stretch reads KIWQNLRLKTAAAAAAEAPEGAAAGDGGRMALARVSSVKLISKAKIRTVK. The chain crosses the membrane as a helical span at residues 276–294; sequence MTFIIVLAFIVCWTPFFFV. Residues 295–309 are Extracellular-facing; the sequence is QMWSVWDANAPKEAS. Residues 310–332 form a helical membrane-spanning segment; that stretch reads AFIIVMLLASLNSCCNPWIYMLF. Residues 333–389 are Cytoplasmic-facing; sequence TGHLFHELVQRFLCCSASYLKGNRLGETSTSKKSNSSSFVLSHRSSSQRSCSQPSTA. Residues 358-389 form a disordered region; the sequence is GETSTSKKSNSSSFVLSHRSSSQRSCSQPSTA. Residues 360–389 are compositionally biased toward low complexity; that stretch reads TSTSKKSNSSSFVLSHRSSSQRSCSQPSTA. Phosphoserine is present on residues Ser-366 and Ser-368.

Belongs to the G-protein coupled receptor 1 family. Vasopressin/oxytocin receptor subfamily.

It localises to the cell membrane. In terms of biological role, receptor for oxytocin. The activity of this receptor is mediated by G proteins which activate a phosphatidylinositol-calcium second messenger system. The protein is Oxytocin receptor (OXTR) of Macaca mulatta (Rhesus macaque).